Reading from the N-terminus, the 762-residue chain is MASLLQDQLTTDQDLLLMQEGMPMRKVRSKSWKKLRYFRLQNDGMTVWHARQARGSAKPSFSISDVETIRNGHDSELLRSLAEELPLEQGFTIVFHGRRSNLDLMANSVEEAQIWMRGLQLLVDLVTSMDHQERLDQWLSDWFQRGDKNQDGKMSFQEVQRLLHLMNVEMDQEYAFSLFQAADTSQSGTLEGEEFVQFYKALTKRAEVQELFESFSADGQKLTLLEFLDFLQEEQKERDCTSELALELIDRYEPSDSGKLRHVLSMDGFLSYLCSKDGDIFNPACLPIYQDMTQPLNHYFICSSHNTYLVGDQLCGQSSVEGYIRALKRGCRCVEVDVWDGPSGEPVVYHGHTLTSRILFKDVVATVAQYAFQTSDYPVILSLETHCSWEQQQTMARHLTEILGEQLLSTTLDGVLPTQLPSPEELRRKILVKGKKLTLEEDLEYEEEEAEPELEESELALESQFETEPEPQEQNLQNKDKKKKSKPILCPALSSLVIYLKSVSFRSFTHSKEHYHFYEISSFSETKAKRLIKEAGNEFVQHNTWQLSRVYPSGLRTDSSNYNPQELWNAGCQMVAMNMQTAGLEMDICDGHFRQNGGCGYVLKPDFLRDIQSSFHPEKPISPFKAQTLLIQVISGQQLPKVDKTKEGSIVDPLVKVQIFGVRLDTARQETNYVENNGFNPYWGQTLCFRVLVPELAMLRFVVMDYDWKSRNDFIGQYTLPWTCMQQGYRHIHLLSKDGISLRPASIFVYICIQEGLEGDES.

The 109-residue stretch at 16 to 124 (LLMQEGMPMR…WMRGLQLLVD (109 aa)) folds into the PH domain. The substrate binding stretch occupies residues 26–53 (KVRSKSWKKLRYFRLQNDGMTVWHARQA). EF-hand domains are found at residues 134 to 169 (RLDQWLSDWFQRGDKNQDGKMSFQEVQRLLHLMNVE), 170 to 205 (MDQEYAFSLFQAADTSQSGTLEGEEFVQFYKALTKR), and 206 to 237 (AEVQELFESFSADGQKLTLLEFLDFLQEEQKE). Asp147, Asn149, Asp151, Lys153, Glu158, Asp183, Ser185, Ser187, Thr189, and Glu194 together coordinate Ca(2+). Residues 213-243 (ESFSADGQKLTLLEFLDFLQEEQKERDCTSE) carry the GBA motif. The 146-residue stretch at 290-435 (QDMTQPLNHY…LRRKILVKGK (146 aa)) folds into the PI-PLC X-box domain. His305 is a catalytic residue. Residues Asn306, Glu335, and Asp337 each contribute to the Ca(2+) site. His350 is a catalytic residue. Glu384 contributes to the Ca(2+) binding site. Substrate-binding residues include Lys433 and Lys435. Over residues 443 to 471 (LEYEEEEAEPELEESELALESQFETEPEP) the composition is skewed to acidic residues. The disordered stretch occupies residues 443–483 (LEYEEEEAEPELEESELALESQFETEPEPQEQNLQNKDKKK). A Phosphoserine modification is found at Ser457. Residues 493 to 609 (LSSLVIYLKS…GYVLKPDFLR (117 aa)) enclose the PI-PLC Y-box domain. Substrate is bound by residues Ser522 and Arg549. The C2 domain occupies 609–736 (RDIQSSFHPE…QGYRHIHLLS (128 aa)). Ca(2+) contacts are provided by Ile650, Asp652, Asn676, Asp705, Tyr706, and Asp707. Residues 731 to 734 (HIHL) carry the PDZ-binding motif.

As to quaternary structure, interacts with GRIP1. Interacts (via GBA motif) with guanine nucleotide-binding protein G(i) alpha subunit GNAI3 (inactive GDP-bound form); high-affinity interaction. In terms of assembly, interacts (via GBA motif) with guanine nucleotide-binding protein G(i) alpha subunit GNAI3 (inactive GDP-bound form); low-affinity interaction. The cofactor is Ca(2+). In terms of tissue distribution, highly expressed in skeletal muscle and kidney tissues, and at moderate level in intestinal tissue. Expressed in corneal epithelial cells.

It localises to the membrane. Its subcellular location is the nucleus. It is found in the cytoplasm. The protein resides in the endoplasmic reticulum. The enzyme catalyses a 1,2-diacyl-sn-glycero-3-phospho-(1D-myo-inositol-4,5-bisphosphate) + H2O = 1D-myo-inositol 1,4,5-trisphosphate + a 1,2-diacyl-sn-glycerol + H(+). It catalyses the reaction a 1,2-diacyl-sn-glycero-3-phospho-(1D-myo-inositol) + H2O = 1D-myo-inositol 1-phosphate + a 1,2-diacyl-sn-glycerol + H(+). Functionally, hydrolyzes the phosphatidylinositol 4,5-bisphosphate (PIP2) to generate 2 second messenger molecules diacylglycerol (DAG) and inositol 1,4,5-trisphosphate (IP3). DAG mediates the activation of protein kinase C (PKC), while IP3 releases Ca(2+) from intracellular stores. Required for acrosome reaction in sperm during fertilization, probably by acting as an important enzyme for intracellular Ca(2+) mobilization in the zona pellucida-induced acrosome reaction. May play a role in cell growth. Modulates the liver regeneration in cooperation with nuclear PKC. Overexpression up-regulates the Erk signaling pathway and proliferation. Acts as a non-receptor guanine nucleotide exchange factor which binds to and activates guanine nucleotide-binding protein (G-protein) alpha subunit GNAI3. This Homo sapiens (Human) protein is 1-phosphatidylinositol 4,5-bisphosphate phosphodiesterase delta-4.